The following is a 181-amino-acid chain: Lysozyme B (181 aa).

The N-terminal stretch at 1-19 is a signal peptide; it reads MRISFFLLILAVIIGYAYG. The propeptide occupies 139–181; sequence LTDSRPLGPFNVTEEEKAQLFIDHEIAMAQCEAEKTCNGFDLE.

This sequence belongs to the dictyostelium lysozyme family. In terms of processing, contains six disulfide bonds.

It is found in the cytoplasmic vesicle lumen. It catalyses the reaction Hydrolysis of (1-&gt;4)-beta-linkages between N-acetylmuramic acid and N-acetyl-D-glucosamine residues in a peptidoglycan and between N-acetyl-D-glucosamine residues in chitodextrins.. In terms of biological role, has antibacterial activity. In Dictyostelium discoideum (Social amoeba), this protein is Lysozyme B (alyB).